The primary structure comprises 152 residues: Nucleoside diphosphate kinase (152 aa).

Residues lysine 12, phenylalanine 60, arginine 88, threonine 94, arginine 105, and asparagine 115 each coordinate ATP. Histidine 118 functions as the Pros-phosphohistidine intermediate in the catalytic mechanism.

It belongs to the NDK family. Homotrimer. Requires Mg(2+) as cofactor.

It carries out the reaction a 2'-deoxyribonucleoside 5'-diphosphate + ATP = a 2'-deoxyribonucleoside 5'-triphosphate + ADP. It catalyses the reaction a ribonucleoside 5'-diphosphate + ATP = a ribonucleoside 5'-triphosphate + ADP. In terms of biological role, major role in the synthesis of nucleoside triphosphates other than ATP. The ATP gamma phosphate is transferred to the NDP beta phosphate via a ping-pong mechanism, using a phosphorylated active-site intermediate. The chain is Nucleoside diphosphate kinase (ndk-1) from Neurospora crassa (strain ATCC 24698 / 74-OR23-1A / CBS 708.71 / DSM 1257 / FGSC 987).